The chain runs to 102 residues: Small ribosomal subunit protein uS10 (102 aa).

The protein belongs to the universal ribosomal protein uS10 family. As to quaternary structure, part of the 30S ribosomal subunit.

In terms of biological role, involved in the binding of tRNA to the ribosomes. The sequence is that of Small ribosomal subunit protein uS10 from Hyperthermus butylicus (strain DSM 5456 / JCM 9403 / PLM1-5).